The following is a 1005-amino-acid chain: Probable histidine kinase 4 (1005 aa).

Residues 1-37 lie on the Cytoplasmic side of the membrane; it reads MGVGGGGGGGGGEAAAAVAVEGDEAGKGRRWWRVKVK. The helical transmembrane segment at 38–58 threads the bilayer; sequence LSTVAVVAWVLASAALWAGLH. Over 59–333 the chain is Extracellular; it reads WRFRRAALHK…YRNKLHVSWS (275 aa). The CHASE domain occupies 110–321; it reads HPPALDQDTF…GDPLRKHQMV (212 aa). A helical transmembrane segment spans residues 334–354; the sequence is AITTPSGVFVICMLVGYIIYA. Residues 355 to 1005 are Cytoplasmic-facing; the sequence is AWSRYDNVKE…QKFLGPCVSS (651 aa). Residues 389–675 enclose the Histidine kinase domain; it reads TVSHEIRTPM…TFTFTAVLRR (287 aa). The residue at position 392 (H392) is a Phosphohistidine; by autocatalysis. Response regulatory domains follow at residues 700 to 829 and 862 to 999; these read SALL…FQAL and NILV…QKFL. The residue at position 912 (D912) is a 4-aspartylphosphate.

In terms of processing, activation probably requires a transfer of a phosphate group between a His in the transmitter domain and an Asp of the receiver domain. As to expression, highly expressed in young leaves and spikelets, and at lower levels in roots, mature leaves and stems.

It localises to the cell membrane. The enzyme catalyses ATP + protein L-histidine = ADP + protein N-phospho-L-histidine.. Cytokinin receptor related to bacterial two-component regulators. Functions as a histidine kinase and transmits the stress signal to a downstream MAPK cascade. The chain is Probable histidine kinase 4 from Oryza sativa subsp. japonica (Rice).